The following is a 326-amino-acid chain: Inactive peptidyl-prolyl cis-trans isomerase FKBP6 (326 aa).

The PPIase FKBP-type domain maps to 53–142 (DASVLVKYSG…LFEIELLDFL (90 aa)). TPR repeat units follow at residues 170 to 203 (AATE…LHRR), 218 to 251 (LLVF…DRKN), and 252 to 285 (AKAL…QPFN).

The protein belongs to the FKBP6 family. Interacts with HSP72/HSPA2 and CLTC. Interacts with GAPDH; leading to inhibit GAPDH catalytic activity. Interacts (via TPR repeats) with HSP90.

The protein resides in the cytoplasm. It is found in the cytosol. Its subcellular location is the nucleus. Functionally, co-chaperone required during spermatogenesis to repress transposable elements and prevent their mobilization, which is essential for the germline integrity. Acts via the piRNA metabolic process, which mediates the repression of transposable elements during meiosis by forming complexes composed of piRNAs and Piwi proteins and govern the methylation and subsequent repression of transposons. Acts as a co-chaperone via its interaction with HSP90 and is required for the piRNA amplification process, the secondary piRNA biogenesis. May be required together with HSP90 in removal of 16 nucleotide ping-pong by-products from Piwi complexes, possibly facilitating turnover of Piwi complexes. The polypeptide is Inactive peptidyl-prolyl cis-trans isomerase FKBP6 (FKBP6) (Bos taurus (Bovine)).